Consider the following 148-residue polypeptide: Deoxyuridine 5'-triphosphate nucleotidohydrolase (148 aa).

Substrate is bound by residues 67 to 69 (RSG), Asn80, 84 to 86 (LID), and Met94.

It belongs to the dUTPase family. Mg(2+) serves as cofactor.

It carries out the reaction dUTP + H2O = dUMP + diphosphate + H(+). Its pathway is pyrimidine metabolism; dUMP biosynthesis; dUMP from dCTP (dUTP route): step 2/2. This enzyme is involved in nucleotide metabolism: it produces dUMP, the immediate precursor of thymidine nucleotides and it decreases the intracellular concentration of dUTP so that uracil cannot be incorporated into DNA. The polypeptide is Deoxyuridine 5'-triphosphate nucleotidohydrolase (Ralstonia nicotianae (strain ATCC BAA-1114 / GMI1000) (Ralstonia solanacearum)).